The chain runs to 1164 residues: DNA-directed RNA polymerase (1164 aa).

The protein belongs to the RNA polymerase beta chain family. In terms of assembly, the DNA-dependent RNA polymerase used for intermediate and late genes expression consists of eight subunits 147 kDa, 133 kDa, 35 kDa, 30 kDa, 22 kDa, 19 kDa, 18 kDa and 7 kDa totalling more than 500 kDa in mass. The same holoenzyme, with the addition of the transcription-specificity factor RAP94, is used for early gene expression.

Its subcellular location is the virion. It catalyses the reaction RNA(n) + a ribonucleoside 5'-triphosphate = RNA(n+1) + diphosphate. Its function is as follows. Part of the DNA-dependent RNA polymerase which catalyzes the transcription of viral DNA into RNA using the four ribonucleoside triphosphates as substrates. Responsible for the transcription of early, intermediate and late genes. DNA-dependent RNA polymerase associates with the early transcription factor (ETF), itself composed of OPG118 and OPG133, thereby allowing the early genes transcription. Late transcription, and probably also intermediate transcription, require newly synthesized RNA polymerase. The chain is DNA-directed RNA polymerase (OPG151) from Monkeypox virus.